Consider the following 457-residue polypeptide: D-hydantoinase (457 aa).

Residues His-57 and His-59 each contribute to the Zn(2+) site. Phosphoserine is present on Ser-69. Lys-148 is a binding site for Zn(2+). Lys-148 bears the N6-carboxylysine mark. Tyr-153 is a binding site for substrate. His-181 and His-237 together coordinate Zn(2+). Substrate is bound at residue Thr-286. Residue Asp-313 participates in Zn(2+) binding. Substrate is bound at residue Asn-335.

This sequence belongs to the metallo-dependent hydrolases superfamily. Hydantoinase/dihydropyrimidinase family. As to quaternary structure, homodimer and homotetramer. The cofactor is Zn(2+). Post-translationally, carboxylation allows a single lysine to coordinate two zinc ions.

In terms of biological role, catalyzes the stereospecific hydrolysis of the cyclic amide bond of D-hydantoin derivatives. This is D-hydantoinase (hyuA) from Ralstonia pickettii (Burkholderia pickettii).